Consider the following 567-residue polypeptide: MEIYHQYIKLRKQFGRFPKFGDEGSEMLADIRPNEDHGKEYIPRNPVTTVTQCVPEMSEHEANTNAVILVNKAMSHVEGGWPKDVDYTEAEHTIRYRKKVEKDEDYIRTVVQLGSSVEDLIKQNNAVDIYQEYFTNVTMDHTSEAPHVKTVTVFKDPNNIKRSASYVNWHPDGSVPKVVVAYSILQFQQQPAGMPLSSYIWDVNNPNTPEYEMVPTSQICCAKFNLKDNNLVGAGQYNGQLAYFDVRKGNGPVEATPIDISHRDPIYDFAWLQSKTGTECMTVSTDGNVLWWDLRKMNECVENMPLKEKNSETTVGGVCLEYDTNAGPTNFMVGTEQGQIFSCNRKAKNPVDRVKYVLSGHHGPIYGLRRNPFNSKYFLSIGDWTARVWVEDTAVKTPILTTKYHPTYLTGGTWSPSRPGVFFTIKMDGAMDVWDLYYKHNEPTLTVQVSDLALTAFAVQESGGTVAVGTSDGCTSVLQLSTGLSEASPAEKANINAMFERETTREKNLEKAIKEAKVKARKEQGRRDEVKDNVTEEQLKALEDEFFKTTDPAVGGGYGAGEGAAAE.

WD repeat units follow at residues 214–254, 261–302, 360–399, and 404–444; these read VPTS…GPVE, SHRD…ECVE, GHHG…KTPI, and YHPT…NEPT.

Belongs to the dynein intermediate chain family. Consists of at least 3 heavy chains (alpha, beta and gamma), 2 intermediate chains and 8 light chains.

It localises to the cytoplasm. The protein resides in the cytoskeleton. Its subcellular location is the flagellum axoneme. Its function is as follows. May play a role in regulating dynein heavy chain (DHC) activity. May function in holding IC78 to the DHC, or in stabilizing the entire dynein complex. This is Dynein, 70 kDa intermediate chain, flagellar outer arm (ODA6) from Chlamydomonas reinhardtii (Chlamydomonas smithii).